Here is a 189-residue protein sequence, read N- to C-terminus: Ion-translocating oxidoreductase complex subunit B (189 aa).

The tract at residues 1 to 26 (MSAIVIAIVVLTILALVFGVLLGFAA) is hydrophobic. Residues 32–90 (EGNPLTDQIEALLPQTQCGQCGYPGCRPYAEAIANGDKVNKCPPGGAATMEKLADLMGV) form the 4Fe-4S domain. 12 residues coordinate [4Fe-4S] cluster: cysteine 49, cysteine 52, cysteine 57, cysteine 73, cysteine 114, cysteine 117, cysteine 120, cysteine 124, cysteine 144, cysteine 147, cysteine 150, and cysteine 154. 2 consecutive 4Fe-4S ferredoxin-type domains span residues 105-134 (KVAYIREDECIGCTKCIQACPVDAILGSGK) and 135-164 (LMHTVITDYCTGCDLCVAPCPVDCIDMLPV).

The protein belongs to the 4Fe4S bacterial-type ferredoxin family. RnfB subfamily. The complex is composed of six subunits: RnfA, RnfB, RnfC, RnfD, RnfE and RnfG. Requires [4Fe-4S] cluster as cofactor.

The protein resides in the cell inner membrane. Functionally, part of a membrane-bound complex that couples electron transfer with translocation of ions across the membrane. This Shewanella pealeana (strain ATCC 700345 / ANG-SQ1) protein is Ion-translocating oxidoreductase complex subunit B.